The following is a 412-amino-acid chain: Subtilisin-like protease 6 (412 aa).

The signal sequence occupies residues 1–20 (MGFITKAIPIVLAALSTVNG). The propeptide occupies 21–127 (ARILEAGPHA…VRATTNGTNL (107 aa)). Residues 36–120 (KYIVVMKKDV…FIEPDFVVRA (85 aa)) enclose the Inhibitor I9 domain. In terms of domain architecture, Peptidase S8 spans 135–412 (SWGLARVSTR…SKLIYNGSGK (278 aa)). Catalysis depends on charge relay system residues Asp-167 and His-198. N-linked (GlcNAc...) asparagine glycosylation is found at Asn-252, Asn-264, and Asn-325. The active-site Charge relay system is Ser-358. N-linked (GlcNAc...) asparagine glycosylation is present at Asn-408.

Belongs to the peptidase S8 family.

The protein resides in the secreted. Its function is as follows. Secreted subtilisin-like serine protease with keratinolytic activity that contributes to pathogenicity. In Trichophyton verrucosum (strain HKI 0517), this protein is Subtilisin-like protease 6 (SUB6).